A 1256-amino-acid polypeptide reads, in one-letter code: SNF2 domain-containing protein CLASSY 1 (1256 aa).

Disordered stretches follow at residues 269–290 (ELRR…EIQP) and 448–467 (GNVV…VSRE). Residues 278–290 (GRPERYGDSEIQP) show a composition bias toward basic and acidic residues. Residues 451 to 463 (VHKRNGPHSRIRS) are compositionally biased toward basic residues. The region spanning 699 to 898 (DPSSDKIGGC…FNTLCLARPK (200 aa)) is the Helicase ATP-binding domain. 712-719 (HTPGAGKT) contributes to the ATP binding site. Residues 849 to 852 (DEGH) carry the DEAH box motif. The region spanning 1061 to 1222 (FVLNLVFRVV…EFVEDPSQWQ (162 aa)) is the Helicase C-terminal domain.

Belongs to the helicase family. In terms of assembly, interacts with NRPD1, NRPD3 and SHH1.

The protein localises to the nucleus. It localises to the nucleoplasm. It is found in the nucleolus. Functionally, probable chromatin remodeling factor. Required for the initial establishment of DNA methylation and for accumulation of 24-nt siRNAs. May act on RNA templates by remodeling ribonucleoprotein structures and thereby influencing the availability of the RNA to polymerases. The protein is SNF2 domain-containing protein CLASSY 1 (CLSY1) of Arabidopsis thaliana (Mouse-ear cress).